Reading from the N-terminus, the 456-residue chain is MALWGGRFSQESSALFKLFNDSLPVDFRLIEQDIVGSIAWASAITQVGILTEKECTELHQALNELLAETQDSPELIIASGAEDIHSFVEQSLIAKVGDLGKKLHTGRSRNDQVATDLKLWCKKEGEQLLGLLANLRAALIGLAEREIDAVMPGYTHLQRAQPILFGHWCLAYVEMFERDISRLQDALKRADTCPLGTGALAGTAYPMDRVKLAKSLGFASPTLNSLDTVSDRDHVIEICSNASISMMHLSRMAEDLIFFNSGEAGFIELDDEVTSGSSLMPQKKNPDALELIRGKTGRVYGALMGILTTMKALPLAYNKDMQEDKEGLFDVMDSWSICLEMAALVLSGLQVNREKTLKAAKQGYANSTELADYLVAKGMPFREAHHVVGEAVVSAIAKQTPLEELTLVELQAFSAAIEADVYDCLTIESCLAKREALGGTSLSQVRNALATKKENC.

This sequence belongs to the lyase 1 family. Argininosuccinate lyase subfamily.

It localises to the cytoplasm. The catalysed reaction is 2-(N(omega)-L-arginino)succinate = fumarate + L-arginine. Its pathway is amino-acid biosynthesis; L-arginine biosynthesis; L-arginine from L-ornithine and carbamoyl phosphate: step 3/3. In Shewanella pealeana (strain ATCC 700345 / ANG-SQ1), this protein is Argininosuccinate lyase.